The sequence spans 147 residues: DNA polymerase III subunit chi (147 aa).

It belongs to the DNA polymerase III chi/HolC chain family. The DNA polymerase III holoenzyme complex contains at least 10 different subunits organized into 3 functionally essential subassemblies: the Pol III core, the beta sliding clamp processivity factor and the clamp-loading complex. The Pol III core (subunits alpha, epsilon and theta) contains the polymerase and the 3'-5' exonuclease proofreading activities. The polymerase is tethered to the template via the dimeric beta sliding clamp processivity factor. The clamp-loading complex (also called gamma complex) assembles the beta sliding clamp onto the primed template and plays a central role in the organization and communication at the replication fork. The clamp-loading complex contains delta, delta', psi and chi, and 3 copies of either or both of two different DnaX proteins, gamma and tau. The DNA replisome complex has a single clamp loader (3 tau and 1 each of delta, delta', psi and chi subunits) which binds 3 Pol III cores (1 core on the leading strand and 2 on the lagging strand) each with a beta sliding clamp dimer. Additional proteins in the replisome are other copies of gamma, psi (holD) and chi (this protein), SSB, DNA helicase and RNA primase. The clamp loader hydrolyzes ATP to assemble the beta processivity factor onto the primed template and plays a central role in the organization and communication at the replication fork. The only subunit of the DNA polymerase III holoenzyme known to interact with single-stranded DNA binding protein (SSB). Interacts directly with the psi subunit (holD). Interacts directly with DNA helicase YoaA. It binds to HolD and YoaA, but not both simultaneously.

The catalysed reaction is DNA(n) + a 2'-deoxyribonucleoside 5'-triphosphate = DNA(n+1) + diphosphate. Functionally, part of the beta sliding clamp loading complex, which hydrolyzes ATP to load the beta clamp onto primed DNA to form the DNA replication pre-initiation complex. DNA polymerase III is a complex, multichain enzyme responsible for most of the replicative synthesis in bacteria. This DNA polymerase also exhibits 3' to 5' exonuclease activity. Genetically identified as involved in the repair of replication forks and tolerance of the chain-terminating nucleoside analog 3' AZT. This subunit may stabilize YoaA and/or stimulate the helicase activity of YoaA. The protein is DNA polymerase III subunit chi of Escherichia coli (strain K12).